A 467-amino-acid chain; its full sequence is UDP-N-acetylmuramate--L-alanine ligase (467 aa).

114 to 120 contributes to the ATP binding site; that stretch reads GTHGKTT.

This sequence belongs to the MurCDEF family.

It is found in the cytoplasm. The enzyme catalyses UDP-N-acetyl-alpha-D-muramate + L-alanine + ATP = UDP-N-acetyl-alpha-D-muramoyl-L-alanine + ADP + phosphate + H(+). Its pathway is cell wall biogenesis; peptidoglycan biosynthesis. In terms of biological role, cell wall formation. The chain is UDP-N-acetylmuramate--L-alanine ligase from Rhodopseudomonas palustris (strain BisB5).